Here is a 234-residue protein sequence, read N- to C-terminus: Adenosine 5'-phosphosulfate reductase (234 aa).

Residues cysteine 120, cysteine 121, cysteine 203, and cysteine 206 each contribute to the [4Fe-4S] cluster site. Cysteine 229 acts as the Nucleophile; cysteine thiosulfonate intermediate in catalysis.

This sequence belongs to the PAPS reductase family. CysH subfamily. [4Fe-4S] cluster serves as cofactor.

It is found in the cytoplasm. It catalyses the reaction [thioredoxin]-disulfide + sulfite + AMP + 2 H(+) = adenosine 5'-phosphosulfate + [thioredoxin]-dithiol. It participates in sulfur metabolism; hydrogen sulfide biosynthesis; sulfite from sulfate. Catalyzes the formation of sulfite from adenosine 5'-phosphosulfate (APS) using thioredoxin as an electron donor. This is Adenosine 5'-phosphosulfate reductase from Bacillus cytotoxicus (strain DSM 22905 / CIP 110041 / 391-98 / NVH 391-98).